The following is a 67-amino-acid chain: DNA-directed RNA polymerase subunit omega (67 aa).

It belongs to the RNA polymerase subunit omega family. As to quaternary structure, the RNAP catalytic core consists of 2 alpha, 1 beta, 1 beta' and 1 omega subunit. When a sigma factor is associated with the core the holoenzyme is formed, which can initiate transcription.

The enzyme catalyses RNA(n) + a ribonucleoside 5'-triphosphate = RNA(n+1) + diphosphate. Functionally, promotes RNA polymerase assembly. Latches the N- and C-terminal regions of the beta' subunit thereby facilitating its interaction with the beta and alpha subunits. The sequence is that of DNA-directed RNA polymerase subunit omega from Leptothrix cholodnii (strain ATCC 51168 / LMG 8142 / SP-6) (Leptothrix discophora (strain SP-6)).